We begin with the raw amino-acid sequence, 2108 residues long: Kinesin-like protein KIF26B (2108 aa).

2 disordered regions span residues Met-1–Asp-124 and Lys-263–Gln-287. Residues Trp-40–Ala-50 are compositionally biased toward basic and acidic residues. Residues Gly-58–Gly-98 show a composition bias toward low complexity. The segment covering Ser-99–Ser-120 has biased composition (gly residues). Positions Lys-450–Met-801 constitute a Kinesin motor domain. Gly-546–Ser-553 provides a ligand contact to ATP. Disordered stretches follow at residues Lys-805–Arg-825, Ser-876–Glu-917, Asp-937–Lys-1166, Glu-1406–Asp-1504, Gly-1519–Lys-1653, Ala-1685–Leu-1799, and Arg-1824–Gly-1974. The span at Ser-1004–Ser-1046 shows a compositional bias: low complexity. Basic and acidic residues predominate over residues Arg-1424–Met-1461. Residues Ser-1491–Ser-1500 show a composition bias toward low complexity. Polar residues-rich tracts occupy residues Ala-1521 to Leu-1537 and Arg-1611 to Asn-1628. 2 stretches are compositionally biased toward low complexity: residues Ser-1713–Ser-1730 and Ser-1751–Leu-1763. Positions Pro-1781–Leu-1795 are enriched in polar residues. Residues Arg-1824–Leu-1836 show a composition bias toward low complexity. Thr-1855 is modified (phosphothreonine). Polar residues-rich tracts occupy residues Gly-1866 to Leu-1875 and Ala-1907 to Val-1925. Residues Arg-1930 to Leu-1948 show a composition bias toward basic residues. Over residues Leu-1954–Gly-1968 the composition is skewed to polar residues. Residue Ser-1958 is modified to Phosphoserine.

Belongs to the TRAFAC class myosin-kinesin ATPase superfamily. Kinesin family. KIF26 subfamily. As to quaternary structure, interacts with MYH10. In terms of processing, phosphorylation at Thr-1855 and Ser-1958 by CDKs, mainly CDK2 and CDK5, enhances the interaction with NEDD4, polyubiquitination, and subsequent proteasomal degradation. Phosphorylation occurs upon loss of interaction with microtubules. Post-translationally, polyubiquitinated by NEDD4, resulting in proteasomal degradation.

Its subcellular location is the cytoplasm. It is found in the cytoskeleton. Functionally, essential for embryonic kidney development. Plays an important role in the compact adhesion between mesenchymal cells adjacent to the ureteric buds, possibly by interacting with MYH10. This could lead to the establishment of the basolateral integrity of the mesenchyme and the polarized expression of ITGA8, which maintains the GDNF expression required for further ureteric bud attraction. Although it seems to lack ATPase activity it is constitutively associated with microtubules. The polypeptide is Kinesin-like protein KIF26B (KIF26B) (Homo sapiens (Human)).